We begin with the raw amino-acid sequence, 294 residues long: Beta-glucoside kinase (294 aa).

5–11 provides a ligand contact to ATP; sequence AFDIGGT.

The protein belongs to the ROK (NagC/XylR) family.

The catalysed reaction is D-cellobiose + ATP = 6-phospho-beta-D-glucosyl-(1-&gt;4)-D-glucose + ADP + H(+). In terms of biological role, catalyzes the ATP-dependent phosphorylation of cellobiose to produce cellobiose-6'-P. May have a dual role of kinase and transcriptional regulator of the cellobiose-PTS operon. In Listeria monocytogenes serovar 1/2a (strain ATCC BAA-679 / EGD-e), this protein is Beta-glucoside kinase (bglK).